The chain runs to 354 residues: Interferon-inducible protein AIM2 (354 aa).

Positions 1 to 87 constitute a Pyrin domain; it reads MESEYREMLL…ANALEEKKKE (87 aa). The interval 95 to 124 is disordered; sequence NTKKRGTQKVENRSQAENCSAASATRSDND. Over residues 109–120 the composition is skewed to polar residues; sequence QAENCSAASATR. The HIN-200 domain maps to 144 to 341; sequence MVAEQEAIRE…SGPCSFFKVI (198 aa).

The protein belongs to the HIN-200 family. In terms of assembly, self-associates; forms homooligomers in response to cytosolic double-stranded DNA (dsDNA) and the dsDNA seems to serve as oligomerization platform. Component of AIM2 inflammasome, which consists of a signal sensor component (AIM2), an adapter (PYCARD/ASC), which recruits an effector pro-inflammatory caspase (CASP1). Interacts (via pyrin domain) with PYCARD/ASC (via pyrin domain); interaction is direct. Component of the AIM2 PANoptosome complex, a multiprotein complex that drives inflammatory cell death (PANoptosis). Interacts with EIF2AK2/PKR. Interacts with MAPRE1. Interacts (via HIN-200 domain) with IFI202 (via HIN-200 domain 2); preventing activation of the AIM2 inflammasome. Interacts with RACK1; promoting association with PP2A phosphatase and dephosphorylation of AKT1. Interacts with TRIM11; promoting AIM2 recruitment to autophagosomes and autophagy-dependent degradation. In terms of processing, degraded via selective autophagy following interaction with TRIM11. Expressed in developing neurons. Highly expressed in regulatory T-cells (Treg).

It is found in the cytoplasm. It localises to the inflammasome. Its subcellular location is the nucleus. Inactive in absence of double-stranded DNA (dsDNA). Homooligomerizes upon binding to dsDNA, dsDNA serving as an oligomerization platform. AIM2 requires large dsDNA to generate a structural template that couples dsDNA ligand-binding and homooligomerization. Homooligomerization is followed by recruitment of PYCARD/ASC to initiate speck formation (nucleation). AIM2 and PYCARD/ASC homooligomer filaments assemble bidirectionally and the recognition between AIM2 and PYCARD/ASC oligomers occurs in a head-to-tail manner. Clustered PYCARD/ASC nucleates the formation of CASP1 filaments through the interaction of their respective CARD domains, acting as a platform for CASP1 polymerization and activation. Active CASP1 then specifically processes protein precursors, such as gasdermin-D (GSDMD), IL1B and IL18, leading to the release of mature cytokines in the extracellular milieu or pyroptosis, depending on cell type. AIM2 can be activated in response to events that cause genomic DNA (HIV protease inhibitor nelfinavir) or mitochondrial DNA release in the cytoplasm (such as Perfluoroalkyl substance pollutants or cholesterol overload). Activation of the AIM2 inflammasome is inhibited by IFI202. Activation of the AIM2 inflammasome is inhibited by TRIM11, which promotes autophagy-dependent degradation of AIM2. Sensor component of the AIM2 inflammasome, which mediates inflammasome activation in response to the presence of double-stranded DNA (dsDNA) in the cytosol, leading to subsequent pyroptosis. Inflammasomes are supramolecular complexes that assemble in the cytosol in response to pathogens and other damage-associated signals and play critical roles in innate immunity and inflammation. Acts as a recognition receptor (PRR): specifically recognizes and binds dsDNA in the cytosol, and mediates the formation of the inflammasome polymeric complex composed of AIM2, CASP1 and PYCARD/ASC. Recruitment of pro-caspase-1 (proCASP1) to the AIM2 inflammasome promotes caspase-1 (CASP1) activation, which subsequently cleaves and activates inflammatory cytokines IL1B and IL18 and gasdermin-D (GSDMD), promoting cytokine secretion. In some cells, CASP1 activation mediates cleavage and activation of GSDMD, triggering pyroptosis without promoting cytokine secretion. Detects cytosolic dsDNA of viral and bacterial origin in a non-sequence-specific manner. Involved in the DNA damage response caused by acute ionizing radiation by mediating pyroptosis of intestinal epithelial cells and bone marrow cells in response to double-strand DNA breaks. Mechanistically, AIM2 senses DNA damage in the nucleus to mediate inflammasome assembly and inflammatory cell death. Also acts as a regulator of neurodevelopment via its role in the DNA damage response: acts by promoting neural cell death in response to DNA damage in the developing brain, thereby purging genetically compromised cells of the central nervous system. Pyroptosis mediated by the AIM2 inflammasome in response to DNA damage is dependent on GSDMD without involving IL1B and IL18 cytokine secretion. Also acts as a mediator of pyroptosis, necroptosis and apoptosis (PANoptosis), an integral part of host defense against pathogens, in response to bacterial infection. Can also trigger PYCARD/ASC-dependent, caspase-1-independent cell death that involves caspase-8 (CASP8). Its function is as follows. Also acts as a tumor suppressor independently of its role in inflammatory response. Able to suppress overt cell proliferation in enterocytes: restricts stem cell proliferation in the intestinal mucosa in an inflammasome-independent manner, contributing to a decrease in the likelihood of colorectal cancer development. AIM2 suppresses cell proliferation by inhibiting phosphorylation of AKT1 at 'Ser-473', preventing AKT1 activation and AKT-mTOR signaling pathway. Inhibits AKT1 phosphorylation both by inhibiting the activity of PRKDC/DNA-PK kinase and promoting dephosphorylation by PP2A phosphatase. Also acts as a key regulator of regulatory T-cells (Treg) homeostasis by promoting their stability: acts by preventing AKT1 activation. Its role in Treg homeostasis is important to restain autoimmune diseases. The chain is Interferon-inducible protein AIM2 from Mus musculus (Mouse).